We begin with the raw amino-acid sequence, 582 residues long: ATP-dependent lipid A-core flippase (582 aa).

5 helical membrane-spanning segments follow: residues 26–46 (LIAA…LIYL), 68–88 (ILVM…SYCL), 140–160 (YVLV…AVMV), 164–184 (WQLS…ISIV), and 252–272 (GLVQ…ATFP). Positions 27–310 (IAASVALILN…LTSVNSQFQR (284 aa)) constitute an ABC transmembrane type-1 domain. Residues 342-578 (ITFDNVIFSY…GGAYKQLYSM (237 aa)) enclose the ABC transporter domain. 376–383 (GRSGSGKS) is an ATP binding site.

Belongs to the ABC transporter superfamily. Lipid exporter (TC 3.A.1.106) family. In terms of assembly, homodimer.

The protein resides in the cell inner membrane. It catalyses the reaction ATP + H2O + lipid A-core oligosaccharideSide 1 = ADP + phosphate + lipid A-core oligosaccharideSide 2.. Functionally, involved in lipopolysaccharide (LPS) biosynthesis. Translocates lipid A-core from the inner to the outer leaflet of the inner membrane. Transmembrane domains (TMD) form a pore in the inner membrane and the ATP-binding domain (NBD) is responsible for energy generation. This Haemophilus ducreyi (strain 35000HP / ATCC 700724) protein is ATP-dependent lipid A-core flippase.